Here is a 318-residue protein sequence, read N- to C-terminus: Ribosomal protein L11 methyltransferase (318 aa).

Residues Thr159, Gly180, Asp202, and Asn253 each coordinate S-adenosyl-L-methionine.

Belongs to the methyltransferase superfamily. PrmA family.

It is found in the cytoplasm. It catalyses the reaction L-lysyl-[protein] + 3 S-adenosyl-L-methionine = N(6),N(6),N(6)-trimethyl-L-lysyl-[protein] + 3 S-adenosyl-L-homocysteine + 3 H(+). In terms of biological role, methylates ribosomal protein L11. The polypeptide is Ribosomal protein L11 methyltransferase (Lachnospira eligens (strain ATCC 27750 / DSM 3376 / VPI C15-48 / C15-B4) (Eubacterium eligens)).